Here is a 125-residue protein sequence, read N- to C-terminus: Small ribosomal subunit protein uS13 (125 aa).

It belongs to the universal ribosomal protein uS13 family. In terms of assembly, part of the 30S ribosomal subunit. Forms a loose heterodimer with protein S19. Forms two bridges to the 50S subunit in the 70S ribosome.

Its function is as follows. Located at the top of the head of the 30S subunit, it contacts several helices of the 16S rRNA. In the 70S ribosome it contacts the 23S rRNA (bridge B1a) and protein L5 of the 50S subunit (bridge B1b), connecting the 2 subunits; these bridges are implicated in subunit movement. Contacts the tRNAs in the A and P-sites. The sequence is that of Small ribosomal subunit protein uS13 from Rickettsia rickettsii (strain Iowa).